Consider the following 197-residue polypeptide: TLE family member 5 (197 aa).

The tract at residues 166–197 is CCN domain; that stretch reads LSALGSQTHLSKEDKNGHDGDTHQEDDGEKSD. The tract at residues 170–197 is disordered; that stretch reads GSQTHLSKEDKNGHDGDTHQEDDGEKSD. The span at 175–197 shows a compositional bias: basic and acidic residues; sequence LSKEDKNGHDGDTHQEDDGEKSD. Residue serine 196 is modified to Phosphoserine.

It belongs to the WD repeat Groucho/TLE family. As to quaternary structure, homooligomer and heterooligomer with other family members. Binds TCF7 and the NF-kappa-B subunit RELA. Interacts with PHF12. Interacts (via Q domain) with SIX3. Interacts with SIX6. Post-translationally, ubiquitinated by XIAP/BIRC4. In terms of tissue distribution, ubiquitously expressed in developing embryos by midgestation, a wide expression is conserved in adult. In mouse, abundantly expressed in muscle, heart and brain.

The protein resides in the nucleus. Transcriptional corepressor. Acts as a dominant repressor towards other family members. Inhibits NF-kappa-B-regulated gene expression. May be required for the initiation and maintenance of the differentiated state. Essential for the transcriptional repressor activity of SIX3 during retina and lens development. The sequence is that of TLE family member 5 from Mus musculus (Mouse).